The chain runs to 542 residues: CTP synthase (542 aa).

The amidoligase domain stretch occupies residues 1–265; the sequence is MARYVFITGG…DSEVLSAFGI (265 aa). Serine 13 is a binding site for CTP. Serine 13 lines the UTP pocket. 14 to 19 provides a ligand contact to ATP; sequence SLGKGI. An L-glutamine-binding site is contributed by tyrosine 54. Aspartate 71 provides a ligand contact to ATP. Aspartate 71 and glutamate 139 together coordinate Mg(2+). CTP-binding positions include 146-148, 186-191, and lysine 222; these read DIE and KTKPTQ. Residues 186-191 and lysine 222 contribute to the UTP site; that span reads KTKPTQ. Residues 291–541 enclose the Glutamine amidotransferase type-1 domain; that stretch reads TIAVVGKYTG…IEAAIEQSRL (251 aa). Residue glycine 353 coordinates L-glutamine. Residue cysteine 380 is the Nucleophile; for glutamine hydrolysis of the active site. Residues 381–384, glutamate 404, and arginine 469 contribute to the L-glutamine site; that span reads FGMQ. Residues histidine 514 and glutamate 516 contribute to the active site.

It belongs to the CTP synthase family. Homotetramer.

The enzyme catalyses UTP + L-glutamine + ATP + H2O = CTP + L-glutamate + ADP + phosphate + 2 H(+). The catalysed reaction is L-glutamine + H2O = L-glutamate + NH4(+). It catalyses the reaction UTP + NH4(+) + ATP = CTP + ADP + phosphate + 2 H(+). The protein operates within pyrimidine metabolism; CTP biosynthesis via de novo pathway; CTP from UDP: step 2/2. Allosterically activated by GTP, when glutamine is the substrate; GTP has no effect on the reaction when ammonia is the substrate. The allosteric effector GTP functions by stabilizing the protein conformation that binds the tetrahedral intermediate(s) formed during glutamine hydrolysis. Inhibited by the product CTP, via allosteric rather than competitive inhibition. Its function is as follows. Catalyzes the ATP-dependent amination of UTP to CTP with either L-glutamine or ammonia as the source of nitrogen. Regulates intracellular CTP levels through interactions with the four ribonucleotide triphosphates. This chain is CTP synthase, found in Brucella canis (strain ATCC 23365 / NCTC 10854 / RM-666).